A 206-amino-acid polypeptide reads, in one-letter code: Large ribosomal subunit protein bL25 (206 aa).

The tract at residues 1–91 (MEYRLKAYYR…RPEHVDFFVL (91 aa)) is bL25 domain. Positions 92–206 (SDEPVEMYVP…IKKGKEEEEE (115 aa)) are CTC domain. Residues 184–206 (AEEAAAEVAEPEVIKKGKEEEEE) are disordered. The span at 195 to 206 (EVIKKGKEEEEE) shows a compositional bias: basic and acidic residues.

Belongs to the bacterial ribosomal protein bL25 family. CTC subfamily. Part of the 50S ribosomal subunit. Contacts the 5S rRNA.

Functionally, this is one of 3 proteins that mediate the attachment of the 5S rRNA onto the large ribosomal subunit. In Thermus thermophilus, this protein is Large ribosomal subunit protein bL25 (rplY).